The following is a 360-amino-acid chain: NADH-quinone oxidoreductase subunit H (360 aa).

Transmembrane regions (helical) follow at residues Gly-20–Met-40, Gly-95–Ile-115, Leu-130–Ala-150, Phe-176–Ala-196, Gly-206–Ile-226, Ile-261–Phe-281, Ile-297–Ile-317, and Ile-336–Trp-356.

It belongs to the complex I subunit 1 family. In terms of assembly, NDH-1 is composed of 14 different subunits. Subunits NuoA, H, J, K, L, M, N constitute the membrane sector of the complex.

The protein localises to the cell inner membrane. The enzyme catalyses a quinone + NADH + 5 H(+)(in) = a quinol + NAD(+) + 4 H(+)(out). Functionally, NDH-1 shuttles electrons from NADH, via FMN and iron-sulfur (Fe-S) centers, to quinones in the respiratory chain. The immediate electron acceptor for the enzyme in this species is believed to be ubiquinone. Couples the redox reaction to proton translocation (for every two electrons transferred, four hydrogen ions are translocated across the cytoplasmic membrane), and thus conserves the redox energy in a proton gradient. This subunit may bind ubiquinone. This is NADH-quinone oxidoreductase subunit H from Verminephrobacter eiseniae (strain EF01-2).